A 143-amino-acid chain; its full sequence is Large ribosomal subunit protein uL11 (143 aa).

It belongs to the universal ribosomal protein uL11 family. In terms of assembly, part of the ribosomal stalk of the 50S ribosomal subunit. Interacts with L10 and the large rRNA to form the base of the stalk. L10 forms an elongated spine to which L12 dimers bind in a sequential fashion forming a multimeric L10(L12)X complex. One or more lysine residues are methylated.

In terms of biological role, forms part of the ribosomal stalk which helps the ribosome interact with GTP-bound translation factors. In Rhizorhabdus wittichii (strain DSM 6014 / CCUG 31198 / JCM 15750 / NBRC 105917 / EY 4224 / RW1) (Sphingomonas wittichii), this protein is Large ribosomal subunit protein uL11.